Reading from the N-terminus, the 123-residue chain is Ribosome-binding factor A (123 aa).

The protein belongs to the RbfA family. In terms of assembly, monomer. Binds 30S ribosomal subunits, but not 50S ribosomal subunits or 70S ribosomes.

Its subcellular location is the cytoplasm. Its function is as follows. One of several proteins that assist in the late maturation steps of the functional core of the 30S ribosomal subunit. Associates with free 30S ribosomal subunits (but not with 30S subunits that are part of 70S ribosomes or polysomes). Required for efficient processing of 16S rRNA. May interact with the 5'-terminal helix region of 16S rRNA. In Cupriavidus taiwanensis (strain DSM 17343 / BCRC 17206 / CCUG 44338 / CIP 107171 / LMG 19424 / R1) (Ralstonia taiwanensis (strain LMG 19424)), this protein is Ribosome-binding factor A.